The following is an 899-amino-acid chain: Receptor-like protein kinase At3g21340 (899 aa).

The signal sequence occupies residues 1-27 (MEYHPQAIRLCALIFISFYALLHLVEA). Residues 28 to 522 (QDQKGFISLD…GAKKMNVVIP (495 aa)) are Extracellular-facing. 10 N-linked (GlcNAc...) asparagine glycosylation sites follow: N100, N146, N185, N240, N266, N420, N436, N449, N468, and N475. LRR repeat units follow at residues 415–438 (IVTSLNLSSSHLTGIIAQGIQNLT), 439–461 (HLQELDLSNNNLTGGIPEFLADI), and 463–485 (SLLVINLSGNNFNGSIPQILLQK). The chain crosses the membrane as a helical span at residues 523–543 (IVASVAFVVVLGSALAFFFIF). At 544-899 (KKKKTSNSQD…FDIGATPDAR (356 aa)) the chain is on the cytoplasmic side. T583 is subject to Phosphothreonine. The 274-residue stretch at 592-865 (NNFERVLGKG…QVVIELNECL (274 aa)) folds into the Protein kinase domain. Residues 598–606 (LGKGGFGMV) and K620 each bind ATP. A Phosphotyrosine modification is found at Y665. D717 functions as the Proton acceptor in the catalytic mechanism. Residue S751 is modified to Phosphoserine. Residues T752 and T757 each carry the phosphothreonine modification. Position 765 is a phosphotyrosine (Y765).

It belongs to the protein kinase superfamily. Ser/Thr protein kinase family. In terms of processing, autophosphorylated on Tyr and Thr residues.

The protein resides in the cell membrane. It carries out the reaction L-seryl-[protein] + ATP = O-phospho-L-seryl-[protein] + ADP + H(+). The catalysed reaction is L-threonyl-[protein] + ATP = O-phospho-L-threonyl-[protein] + ADP + H(+). The enzyme catalyses L-tyrosyl-[protein] + ATP = O-phospho-L-tyrosyl-[protein] + ADP + H(+). Its function is as follows. Probable receptor with a dual specificity kinase activity acting on both serine/threonine- and tyrosine-containing substrates. This chain is Receptor-like protein kinase At3g21340, found in Arabidopsis thaliana (Mouse-ear cress).